Consider the following 177-residue polypeptide: Large ribosomal subunit protein uL6 (177 aa).

Belongs to the universal ribosomal protein uL6 family. Part of the 50S ribosomal subunit.

Its function is as follows. This protein binds to the 23S rRNA, and is important in its secondary structure. It is located near the subunit interface in the base of the L7/L12 stalk, and near the tRNA binding site of the peptidyltransferase center. In Actinobacillus succinogenes (strain ATCC 55618 / DSM 22257 / CCUG 43843 / 130Z), this protein is Large ribosomal subunit protein uL6.